Reading from the N-terminus, the 457-residue chain is MQSSHRILSRLLHSPRKGYIRASVGGSVHFLALFDEKDNGFVDTTHRSFSSLIRSSSHVRGLISTNCLNKGLGVRCSVSLDRETPLIDTYSSHRNFFTRAKQVKRIEINDQHSQRAVTTALWCNFLVFSLKFGVWWTSSSHVIMAEVVHSVADFANQALLAYGLSSSRRAPDALHPYGYSKERFVWSLISAVGIFCLGSGATIVNGVQNLWTSSPPPNMELAAVVIGGSFLIEGASLLVAIQSVKKGAAQEGMTIRDYIWRGHDPTSVAVMTEDGAAVAGLAIAAASLVAVRMTGNPIYDPIGSIVVGNLLGMVAIFLIQRNRHALIGRAMDDQDMSKVLKFLRNDSVVDSLYDCKSEVIGPGSFRFKAEIDFNGQMVVQNYLKRTGREEWAKMFREAAKNGDDSAMLNIMSNYGEEVVTALGSEVDRLEKEIQELVPGIQHVDIEAHNPTPTDPSL.

The Cytoplasmic portion of the chain corresponds to 1–115 (MQSSHRILSR…IEINDQHSQR (115 aa)). The helical transmembrane segment at 116-136 (AVTTALWCNFLVFSLKFGVWW) threads the bilayer. At 137 to 141 (TSSSH) the chain is on the vacuolar side. Residues 142–162 (VIMAEVVHSVADFANQALLAY) traverse the membrane as a helical segment. The Cytoplasmic segment spans residues 163–183 (GLSSSRRAPDALHPYGYSKER). A helical transmembrane segment spans residues 184–204 (FVWSLISAVGIFCLGSGATIV). Residues 205–220 (NGVQNLWTSSPPPNME) are Vacuolar-facing. Residues 221-241 (LAAVVIGGSFLIEGASLLVAI) traverse the membrane as a helical segment. The Cytoplasmic segment spans residues 242 to 267 (QSVKKGAAQEGMTIRDYIWRGHDPTS). A helical transmembrane segment spans residues 268-288 (VAVMTEDGAAVAGLAIAAASL). At 289-297 (VAVRMTGNP) the chain is on the vacuolar side. The helical transmembrane segment at 298-318 (IYDPIGSIVVGNLLGMVAIFL) threads the bilayer. Over 319–457 (IQRNRHALIG…HNPTPTDPSL (139 aa)) the chain is Cytoplasmic.

This sequence belongs to the cation diffusion facilitator (CDF) transporter (TC 2.A.4) family.

The protein resides in the vacuole membrane. Involved in sequestration of excess metal in the cytoplasm into vacuoles to maintain metal homeostasis. The polypeptide is Metal tolerance protein C4 (MTPC4) (Arabidopsis thaliana (Mouse-ear cress)).